Reading from the N-terminus, the 2074-residue chain is Cell adhesion molecule Dscam2 (2074 aa).

A signal peptide spans 1–21; it reads MWISSRFFVILLLLNLDNTCS. Topologically, residues 22-1619 are extracellular; it reads EPFEAHLRGP…QTTVIFANIN (1598 aa). Ig-like C2-type domains follow at residues 31–120, 238–326, 330–417, 422–516, 521–607, 612–698, 707–802, and 805–902; these read PGFV…RIVS, PSVV…LRLT, PIQV…AELQ, PPVL…ARLN, PYIR…GEVT, PSIE…IKYT, PRWI…LKVN, and PYFS…LQVQ. 8 disulfides stabilise this stretch: C53/C109, C259/C310, C352/C400, C444/C500, C541/C590, C633/C686, C728/C783, and C826/C884. Fibronectin type-III domains follow at residues 907 to 1003, 1008 to 1108, 1113 to 1211, and 1215 to 1311; these read PPSV…TEPQ, PPLS…TMED, PPED…SEED, and APAD…TNRI. Residues 1312-1400 form the Ig-like C2-type 9 domain; the sequence is PARIISFGGP…DRLTHTLIVQ (89 aa). Residues C1334 and C1382 are joined by a disulfide bond. Fibronectin type-III domains are found at residues 1402 to 1495 and 1496 to 1595; these read PPTA…TQGQ and SPGH…TKDG. A helical membrane pass occupies residues 1620–1640; sequence LLIPTIAAVSGMFCTIIMIIV. Topologically, residues 1641 to 2074 are cytoplasmic; it reads CYRHMLKNAP…KFFTAPTLPK (434 aa). Disordered regions lie at residues 1739-1766, 1778-1917, 1936-1974, and 2011-2074; these read EGCS…HQRP, PFHN…KSIS, SPSI…SLKQ, and PSSQ…TLPK. The segment covering 1757 to 1766 has biased composition (basic residues); that stretch reads THHHHHHQRP. Polar residues predominate over residues 1831-1846; that stretch reads AQSSTSSDLSPMSEQK. Over residues 1848-1858 the composition is skewed to basic residues; it reads LPRRGRSRYHH. Over residues 1859–1868 the composition is skewed to polar residues; the sequence is QQYQFSTNTT. Low complexity-rich tracts occupy residues 1875–1903, 1942–1974, and 2036–2051; these read NKMN…SNSN, QQQK…SLKQ, and SQQS…QQHP. A compositionally biased stretch (polar residues) spans 2055-2066; the sequence is LNPSTAMLSSKF.

The protein resides in the membrane. Cell adhesion molecule. The polypeptide is Cell adhesion molecule Dscam2 (Dscam2) (Drosophila melanogaster (Fruit fly)).